A 312-amino-acid chain; its full sequence is DNA-directed RNA polymerase subunit alpha (312 aa).

The interval 1–226 (MIEFKKPNIT…EHFKAFESAD (226 aa)) is alpha N-terminal domain (alpha-NTD). The tract at residues 243 to 312 (KEKKLEMTIE…DLGLSLRQED (70 aa)) is alpha C-terminal domain (alpha-CTD).

It belongs to the RNA polymerase alpha chain family. In terms of assembly, homodimer. The RNAP catalytic core consists of 2 alpha, 1 beta, 1 beta' and 1 omega subunit. When a sigma factor is associated with the core the holoenzyme is formed, which can initiate transcription.

It carries out the reaction RNA(n) + a ribonucleoside 5'-triphosphate = RNA(n+1) + diphosphate. Functionally, DNA-dependent RNA polymerase catalyzes the transcription of DNA into RNA using the four ribonucleoside triphosphates as substrates. The protein is DNA-directed RNA polymerase subunit alpha of Lactobacillus delbrueckii subsp. bulgaricus (strain ATCC 11842 / DSM 20081 / BCRC 10696 / JCM 1002 / NBRC 13953 / NCIMB 11778 / NCTC 12712 / WDCM 00102 / Lb 14).